A 311-amino-acid polypeptide reads, in one-letter code: Methionyl-tRNA formyltransferase (311 aa).

110–113 (SLLP) provides a ligand contact to (6S)-5,6,7,8-tetrahydrofolate.

The protein belongs to the Fmt family.

The catalysed reaction is L-methionyl-tRNA(fMet) + (6R)-10-formyltetrahydrofolate = N-formyl-L-methionyl-tRNA(fMet) + (6S)-5,6,7,8-tetrahydrofolate + H(+). Its function is as follows. Attaches a formyl group to the free amino group of methionyl-tRNA(fMet). The formyl group appears to play a dual role in the initiator identity of N-formylmethionyl-tRNA by promoting its recognition by IF2 and preventing the misappropriation of this tRNA by the elongation apparatus. The sequence is that of Methionyl-tRNA formyltransferase from Streptococcus pneumoniae (strain JJA).